Here is a 715-residue protein sequence, read N- to C-terminus: Probable serine/threonine-protein kinase mkcE (715 aa).

Disordered stretches follow at residues 1-125, 228-330, and 366-385; these read MQKI…SQHQ, QLQQ…TTTT, and GVDN…PIQP. Positions 42–53 are enriched in gly residues; that stretch reads YDGGGSGSGSGG. 2 stretches are compositionally biased toward low complexity: residues 54-70 and 80-125; these read SSSN…TGGN and SPSN…SQHQ. A coiled-coil region spans residues 207 to 241; sequence TGKKNFQQQQLQQLQQQQQQQQLQQQQHQQHNHQI. Low complexity predominate over residues 367-378; it reads VDNLSSTTTSLS. In terms of domain architecture, Protein kinase spans 427 to 683; sequence RIGENAEVKG…PTQLLQHPFI (257 aa). ATP contacts are provided by residues 433 to 441 and Lys459; that span reads EVKGAFGTV. Asp550 acts as the Proton acceptor in catalysis.

The protein belongs to the protein kinase superfamily. STE Ser/Thr protein kinase family. STE20 subfamily. It depends on Mg(2+) as a cofactor.

It catalyses the reaction L-seryl-[protein] + ATP = O-phospho-L-seryl-[protein] + ADP + H(+). It carries out the reaction L-threonyl-[protein] + ATP = O-phospho-L-threonyl-[protein] + ADP + H(+). In Dictyostelium discoideum (Social amoeba), this protein is Probable serine/threonine-protein kinase mkcE.